The following is a 394-amino-acid chain: T-cell acute lymphocytic leukemia protein 1 (394 aa).

Positions Met-1 to Arg-17 are enriched in basic and acidic residues. Positions Met-1 to Pro-49 are disordered. 7 tandem repeats follow at residues Thr-83–Thr-89, Thr-94–Pro-100, Thr-105–Pro-111, Thr-116–Pro-122, Thr-127–Pro-133, Ser-149–Pro-155, and Thr-167–Pro-173. Positions Thr-83–Pro-173 are 7 X 7 AA approximate repeats of [TS]-E-L-C-R-[AP]-P. Positions Val-262 to Leu-314 constitute a bHLH domain. Residues Leu-347–Arg-394 are disordered. The span at Ser-367 to His-377 shows a compositional bias: basic and acidic residues.

In terms of tissue distribution, first expressed in patches on the ventral side of the embryo in a region that will give rise to hematopoietic tissue. By late neurula stages, expressed throughout the ventral blood island region. By tailbud stages, expression extends to probable vascular progenitor cells, but is excluded from the presumptive liver anlage. Also expressed in the central nervous system at the tailbud stage.

It is found in the nucleus. Functionally, transcription factor that acts synergistically with lmo2 and gata1 to specify embryonic dorsal mesoderm to a hematopoietic fate. The chain is T-cell acute lymphocytic leukemia protein 1 from Xenopus laevis (African clawed frog).